Reading from the N-terminus, the 80-residue chain is RNA-binding protein Hfq (80 aa).

Positions 10 to 70 constitute a Sm domain; the sequence is DAFLNQVRKE…ISTISPLRPV (61 aa).

The protein belongs to the Hfq family. Homohexamer.

Its function is as follows. RNA chaperone that binds small regulatory RNA (sRNAs) and mRNAs to facilitate mRNA translational regulation in response to envelope stress, environmental stress and changes in metabolite concentrations. Also binds with high specificity to tRNAs. The polypeptide is RNA-binding protein Hfq (Desulforamulus reducens (strain ATCC BAA-1160 / DSM 100696 / MI-1) (Desulfotomaculum reducens)).